The chain runs to 379 residues: Cell cycle checkpoint control protein RAD9A (379 aa).

Y17 is subject to Phosphotyrosine. The tract at residues 40 to 80 (FLFAPLFFQQYQAATPGQDLLRCKILMKSFLSVFRSLAMLE) is possesses 3'-5' exonuclease activity. The segment at 255-379 (SDTDSHSQDL…VLAEDSEGEG (125 aa)) is sufficient for interaction with ABL1. A compositionally biased stretch (basic and acidic residues) spans 257-271 (TDSHSQDLGSPERHQ). Disordered regions lie at residues 257 to 289 (TDSH…DFAN) and 308 to 379 (SRVL…EGEG). 7 positions are modified to phosphoserine: S261, S266, S317, S330, S363, S368, and S375.

Belongs to the rad9 family. Component of the toroidal 9-1-1 (RAD9-RAD1-HUS1) complex, composed of RAD9A, RAD1 and HUS1. The 9-1-1 complex associates with LIG1, POLB, FEN1, RAD17, HDAC1, RPA1 and RPA2. The 9-1-1 complex associates with the RAD17-RFC complex. RAD9A interacts with BCL2L1, FEN1, RAD9B, ABL1, RPA1, ATAD5 and RPA2. Interacts with DNAJC7. Interacts (when phosphorylated) with TOPBP1. In terms of processing, constitutively phosphorylated on serine and threonine amino acids in absence of DNA damage. Hyperphosphorylated by PRKCD and ABL1 upon DNA damage. Its phosphorylation by PRKCD may be required for the formation of the 9-1-1 complex. Phosphorylated at Ser-330 and Ser-375 by CK2, promoting interaction with TOPBP1.

The protein resides in the nucleus. The catalysed reaction is Exonucleolytic cleavage in the 3'- to 5'-direction to yield nucleoside 5'-phosphates.. Its function is as follows. Component of the 9-1-1 cell-cycle checkpoint response complex that plays a major role in DNA repair. The 9-1-1 complex is recruited to DNA lesion upon damage by the RAD17-replication factor C (RFC) clamp loader complex. Acts then as a sliding clamp platform on DNA for several proteins involved in long-patch base excision repair (LP-BER). The 9-1-1 complex stimulates DNA polymerase beta (POLB) activity by increasing its affinity for the 3'-OH end of the primer-template and stabilizes POLB to those sites where LP-BER proceeds; endonuclease FEN1 cleavage activity on substrates with double, nick, or gap flaps of distinct sequences and lengths; and DNA ligase I (LIG1) on long-patch base excision repair substrates. The 9-1-1 complex is necessary for the recruitment of RHNO1 to sites of double-stranded breaks (DSB) occurring during the S phase. RAD9A possesses 3'-&gt;5' double stranded DNA exonuclease activity. The polypeptide is Cell cycle checkpoint control protein RAD9A (RAD9A) (Macaca fascicularis (Crab-eating macaque)).